A 409-amino-acid chain; its full sequence is Protein PHOSPHATE STARVATION RESPONSE 1 (409 aa).

Residues 1–15 (MEARPVHRSGSRDLT) are compositionally biased toward basic and acidic residues. 3 disordered regions span residues 1–42 (MEAR…NSQL), 86–108 (EKQQ…NNDS), and 178–226 (ETNS…TGKA). Composition is skewed to polar residues over residues 16 to 26 (RTSSIPSTQKP) and 90 to 108 (HYTG…NNDS). The segment covering 192–224 (QIPQPQIVQQQPSPSVELRPVSTTSSNSNNGTG) has biased composition (low complexity). Positions 222 to 282 (GTGKARMRWT…HLQKYRTARY (61 aa)) constitute an HTH myb-type domain. Positions 253–278 (PKGVLKIMKVEGLTIYHVKSHLQKYR) form a DNA-binding region, H-T-H motif. The stretch at 314–334 (TEALRLQMEVQKQLHEQLEIQ) forms a coiled coil. The LHEQLE signature appears at 327–332 (LHEQLE). Residues 358 to 370 (GLTKGTASTSDSA) show a composition bias toward polar residues. The segment at 358 to 409 (GLTKGTASTSDSAAKSEQEDKKTADSKEVPEEETRKCEELESPQPKRPKIDN) is disordered. The span at 371 to 396 (AKSEQEDKKTADSKEVPEEETRKCEE) shows a compositional bias: basic and acidic residues. Phosphoserine is present on Ser-399.

This sequence belongs to the MYB-CC family. As to quaternary structure, homodimers and heterodimers. Interacts with SPX1 in a Pi-dependent manner. Does not interact with PHL2 or PHL3. In terms of processing, sumoylated by SIZ1. Sumoylation controls phosphate deficiency responses.

Its subcellular location is the nucleus. Its function is as follows. Transcription factor involved in phosphate starvation signaling. Binds as a dimer to P1BS, an imperfect palindromic sequence 5'-GNATATNC-3', to promote the expression of inorganic phosphate (Pi) starvation-responsive genes. SPX1 is a competitive inhibitor of this DNA-binding. PHR1 binding to its targets is low Pi-dependent. Regulates the expression of miR399. Regulates the expression of IPS1 (At3g09922), a non-coding RNA that mimics the target of miR399 to block the cleavage of PHO2 under Pi-deficient conditions. Regulates lipid remodeling and triacylglycerol accumulation during phosphorus starvation. Required for the shoot-specific hypoxic response. Regulates FER1 expression upon phosphate starvation, linking iron and phosphate homeostasis. Contributes to the homeostasis of both sulfate and phosphate in plants under phosphate deficiency. Required for adaptation to high light and retaining functional photosynthesis during phosphate starvation. Involved in the coregulation of Zn and Pi homeostasis. In Arabidopsis thaliana (Mouse-ear cress), this protein is Protein PHOSPHATE STARVATION RESPONSE 1.